The primary structure comprises 525 residues: Cobyric acid synthase (525 aa).

Residues 251–452 (ELEIAVLYLP…FHGIFDNDLL (202 aa)) form the GATase cobBQ-type domain. The Nucleophile role is filled by C332. Residue H444 is part of the active site.

The protein belongs to the CobB/CobQ family. CobQ subfamily.

It participates in cofactor biosynthesis; adenosylcobalamin biosynthesis. Catalyzes amidations at positions B, D, E, and G on adenosylcobyrinic A,C-diamide. NH(2) groups are provided by glutamine, and one molecule of ATP is hydrogenolyzed for each amidation. The chain is Cobyric acid synthase from Pelotomaculum thermopropionicum (strain DSM 13744 / JCM 10971 / SI).